The sequence spans 198 residues: Peptidyl-tRNA hydrolase (198 aa).

Position 16 (tyrosine 16) interacts with tRNA. The active-site Proton acceptor is the histidine 21. 3 residues coordinate tRNA: phenylalanine 67, asparagine 69, and asparagine 115.

It belongs to the PTH family. Monomer.

It localises to the cytoplasm. It carries out the reaction an N-acyl-L-alpha-aminoacyl-tRNA + H2O = an N-acyl-L-amino acid + a tRNA + H(+). Hydrolyzes ribosome-free peptidyl-tRNAs (with 1 or more amino acids incorporated), which drop off the ribosome during protein synthesis, or as a result of ribosome stalling. Functionally, catalyzes the release of premature peptidyl moieties from peptidyl-tRNA molecules trapped in stalled 50S ribosomal subunits, and thus maintains levels of free tRNAs and 50S ribosomes. This chain is Peptidyl-tRNA hydrolase, found in Prochlorococcus marinus (strain MIT 9301).